A 403-amino-acid polypeptide reads, in one-letter code: Zinc finger CCHC domain-containing protein 3 (403 aa).

The tract at residues 1-158 (MATGGGAEEE…PLQDEPAAAA (158 aa)) is disordered. Basic and acidic residues-rich tracts occupy residues 26–38 (ARGEEADGGREKM) and 47–65 (LAEKKGEFREPRPPRREEE). Over residues 67–79 (GGGGGSAGLGGPA) the composition is skewed to gly residues. Positions 95-121 (GDPKGRRRDPAGEAVDPRKKKGAAEAG) are enriched in basic and acidic residues. The segment covering 128-139 (AAAAAMATPARP) has biased composition (low complexity). Tyr-201 carries the post-translational modification Phosphotyrosine. 3 CCHC-type zinc fingers span residues 335–350 (CFKCGSRTHMSGSCTQ), 352–368 (RCFRCGEEGHLSPYCRK), and 372–387 (CNLCGKRGHAFAQCPK).

Interacts with CGAS. Interacts with RIGI. Interacts with IFIH1/MDA5.

It localises to the cytoplasm. In terms of biological role, nucleic acid-binding protein involved in innate immune response to DNA and RNA viruses. Binds DNA and RNA in the cytoplasm and acts by promoting recognition of viral nucleic acids by virus sensors, such as RIGI, IFIH1/MDA5 and CGAS. Acts as a co-sensor for recognition of double-stranded DNA (dsDNA) by cGAS in the cytoplasm, thereby playing a role in innate immune response to cytosolic dsDNA and DNA virus. Binds dsDNA and probably acts by promoting sensing of dsDNA by CGAS, leading to enhance CGAS oligomerization and activation. Promotes sensing of viral RNA by RIGI-like receptors proteins RIGI and IFIH1/MDA5 via two mechanisms: binds double-stranded RNA (dsRNA), enhancing the binding of RIGI and IFIH1/MDA5 to dsRNA and promotes 'Lys-63'-linked ubiquitination and subsequent activation of RIGI and IFIH1/MDA5. This Homo sapiens (Human) protein is Zinc finger CCHC domain-containing protein 3.